The chain runs to 62 residues: Photosystem II reaction center protein Z (62 aa).

Transmembrane regions (helical) follow at residues 8–28 (AVFA…VALA) and 41–61 (FSGV…NSFI).

This sequence belongs to the PsbZ family. As to quaternary structure, PSII is composed of 1 copy each of membrane proteins PsbA, PsbB, PsbC, PsbD, PsbE, PsbF, PsbH, PsbI, PsbJ, PsbK, PsbL, PsbM, PsbT, PsbY, PsbZ, Psb30/Ycf12, at least 3 peripheral proteins of the oxygen-evolving complex and a large number of cofactors. It forms dimeric complexes.

It localises to the plastid. Its subcellular location is the chloroplast thylakoid membrane. Its function is as follows. May control the interaction of photosystem II (PSII) cores with the light-harvesting antenna, regulates electron flow through the 2 photosystem reaction centers. PSII is a light-driven water plastoquinone oxidoreductase, using light energy to abstract electrons from H(2)O, generating a proton gradient subsequently used for ATP formation. This chain is Photosystem II reaction center protein Z, found in Pinus thunbergii (Japanese black pine).